A 979-amino-acid polypeptide reads, in one-letter code: UPF0182 protein BCG_0095 (979 aa).

The next 7 helical transmembrane spans lie at 19–39 (LVTA…LVDI), 63–83 (LAIV…ALLL), 114–134 (LFGW…ASFD), 174–194 (WLFV…YLFG), 211–231 (VQLA…YWLD), 260–280 (KLVL…AIFL), and 288–308 (MAAA…PLLM). The disordered stretch occupies residues 898–948 (GTGRVATAPGGDAASAPPPGAGGPAPPQAVPPPRTTQPPAAPPRGPDVPPA). Over residues 902–912 (VATAPGGDAAS) the composition is skewed to low complexity. Residues 913 to 946 (APPPGAGGPAPPQAVPPPRTTQPPAAPPRGPDVP) show a composition bias toward pro residues.

This sequence belongs to the UPF0182 family.

The protein resides in the cell membrane. The chain is UPF0182 protein BCG_0095 from Mycobacterium bovis (strain BCG / Pasteur 1173P2).